Reading from the N-terminus, the 136-residue chain is UPF0213 protein ASA_0550 (136 aa).

The GIY-YIG domain maps to 17–92; the sequence is GQWSIYLVRT…KQQSKAFKER (76 aa).

Belongs to the UPF0213 family.

This chain is UPF0213 protein ASA_0550, found in Aeromonas salmonicida (strain A449).